A 311-amino-acid chain; its full sequence is Ornithine carbamoyltransferase (311 aa).

Carbamoyl phosphate-binding positions include 56-59 (STRT), Q83, R107, and 134-137 (HPTQ). L-ornithine-binding positions include N166, D230, and 234-235 (SM). Residues 270–271 (CL) and K298 contribute to the carbamoyl phosphate site.

The protein belongs to the aspartate/ornithine carbamoyltransferase superfamily. OTCase family.

The protein resides in the cytoplasm. The enzyme catalyses carbamoyl phosphate + L-ornithine = L-citrulline + phosphate + H(+). The protein operates within amino-acid degradation; L-arginine degradation via ADI pathway; carbamoyl phosphate from L-arginine: step 2/2. In terms of biological role, reversibly catalyzes the transfer of the carbamoyl group from carbamoyl phosphate (CP) to the N(epsilon) atom of ornithine (ORN) to produce L-citrulline. This chain is Ornithine carbamoyltransferase, found in Ignicoccus hospitalis (strain KIN4/I / DSM 18386 / JCM 14125).